The primary structure comprises 284 residues: Short chain dehydrogenase/reductase AacuD (284 aa).

Val37 lines the NADP(+) pocket. Residues Ser166 and Tyr180 each act as proton donor in the active site. NADP(+) contacts are provided by Tyr180, Lys184, and Thr215. Lys184 acts as the Lowers pKa of active site Tyr in catalysis.

It belongs to the short-chain dehydrogenases/reductases (SDR) family.

Its pathway is secondary metabolite biosynthesis. Functionally, short chain dehydrogenase/reductase; part of the gene cluster that mediates the biosynthesis of the tetrahydroxanthone dimer secalonic acid D. The pathway begins with the synthesis of atrochrysone thioester by the polyketide synthase AacuL. The atrochrysone carboxyl ACP thioesterase AacuM then breaks the thioester bond and releases the atrochrysone carboxylic acid from AacuL. Atrochrysone carboxylic acid is decarboxylated by the decarboxylase AacuI, and oxidized by the anthrone oxygenase AacuG to yield emodin. Emodin is then reduced to emodin hydroquinone by a yet unidentified oxidoreductase. A-ring reduction by the short chain dehydrogenase AacuN, dehydration by the scytalone dehydratase-like protein AacuK and probable spontaneous re-oxidation, results in overall deoxygenation to chrysophanol. Baeyer-Villiger oxidation by the Baeyer-Villiger monooxygenase (BVMO) AacuH then yields monodictyphenone. Monodictyphenone is transformed into compounds with the tetrahydroxanthone skeleton via methylesterification by the methyltransferase AacuQ, followed by the action of the flavin-dependent monooxygenase AacuC, the isomerase AacuP, and the short chain dehydrogenase/reductase AacuF or AacuD. AacuF and AacuD should accept the same compound as a substrate but perform the ketoreduction with a different stereoselectivity, thus yielding blennolides B and A, respectively. In the final step of the biosynthesis, the cytochrome P450 monooxygenase AacuE accepts blennolide B and/or blennolide A to conduct the dimerization reaction to furnish the tetrahydroxanthone dimers, secalonic acids D, B, and F. The protein is Short chain dehydrogenase/reductase AacuD of Aspergillus aculeatus (strain ATCC 16872 / CBS 172.66 / WB 5094).